The sequence spans 651 residues: Acetyl-coenzyme A synthetase (651 aa).

CoA contacts are provided by residues 191–194 (RGGK), Thr311, and Asn335. ATP contacts are provided by residues 387-389 (GEP), 411-416 (DTWWQT), Asp500, and Arg515. Ser523 provides a ligand contact to CoA. ATP is bound at residue Arg526. Residues Val537, His539, and Val542 each coordinate Mg(2+). Arg584 lines the CoA pocket. At Lys609 the chain carries N6-acetyllysine.

Belongs to the ATP-dependent AMP-binding enzyme family. Mg(2+) serves as cofactor. Post-translationally, acetylated. Deacetylation by the SIR2-homolog deacetylase activates the enzyme.

It carries out the reaction acetate + ATP + CoA = acetyl-CoA + AMP + diphosphate. In terms of biological role, catalyzes the conversion of acetate into acetyl-CoA (AcCoA), an essential intermediate at the junction of anabolic and catabolic pathways. AcsA undergoes a two-step reaction. In the first half reaction, AcsA combines acetate with ATP to form acetyl-adenylate (AcAMP) intermediate. In the second half reaction, it can then transfer the acetyl group from AcAMP to the sulfhydryl group of CoA, forming the product AcCoA. This Stutzerimonas stutzeri (strain A1501) (Pseudomonas stutzeri) protein is Acetyl-coenzyme A synthetase.